The chain runs to 546 residues: Oncoprotein-induced transcript 3 protein (546 aa).

Positions 1-19 are cleaved as a signal peptide; that stretch reads MPLSLLLTCLSTTVTLVSP. Asparagine 89 and asparagine 116 each carry an N-linked (GlcNAc...) asparagine glycan. The 41-residue stretch at 182–222 folds into the EGF-like; calcium-binding domain; it reads DENECEHNNGGCSEICVNLKNSHRCACGVGRVLRSDGKTCE. 3 disulfide bridges follow: cysteine 186-cysteine 197, cysteine 193-cysteine 206, and cysteine 208-cysteine 221. The region spanning 261–516 is the ZP domain; it reads TCQVPVLCKS…SRCAQGCHRR (256 aa). Asparagine 299 is a glycosylation site (N-linked (GlcNAc...) asparagine).

Liver-specific. Expressed only in the hepatocytes.

It localises to the nucleus envelope. In terms of biological role, may be involved in hepatocellular function and development. In Mus musculus (Mouse), this protein is Oncoprotein-induced transcript 3 protein (Oit3).